Here is a 242-residue protein sequence, read N- to C-terminus: MAAATRGCRPWGSLLGLLGLVSAAAAAWDLASLRCTLGAFCECDFRPDLPGLECDLAQHLAGQHLAKALVVKALKAFVRDPAPTKPLVLSLHGWTGTGKSYVSSLLAHYLFQGGLRSPRVHHFSPVLHFPHPSHIERYKKDLKSWVQGNLTACGRSLFLFDEMDKMPPGLMEVLRPFLGSSWVVYGTNYRKAIFIFIRWLLKLGHHGRAPPRRSGALPPAPAAPRPALRAQRAGPAGPGAKG.

The signal sequence occupies residues 1–26 (MAAATRGCRPWGSLLGLLGLVSAAAA). Residues 27-189 (AWDLASLRCT…SSWVVYGTNY (163 aa)) constitute a propeptide that is removed on maturation. 93 to 100 (GWTGTGKS) lines the ATP pocket. N149 carries N-linked (GlcNAc...) asparagine glycosylation. Residues 210-242 (PPRRSGALPPAPAAPRPALRAQRAGPAGPGAKG) form a disordered region. Residues 225–235 (RPALRAQRAGP) show a composition bias toward low complexity. Lysine amide is present on K241.

It belongs to the ClpA/ClpB family. Torsin subfamily. Post-translationally, amidation of salusin-alpha(29-Gly) by peptidylglycine alpha-amidating monooxygenase, PAM, converts Lys-241-Gly-242 to Lys-241-NH2 and gives raise to salusin-alpha. As to expression, isoform 4 is ubiquitously expressed, with high level in vascular endothelial cells and vascular smooth muscle cells.

It localises to the secreted. Functionally, salusins -alpha and -beta may be endocrine and/or paracrine factors able to increase intracellular calcium concentrations and induce cell mitogenesis. Salusins may also be potent hypotensive peptides. The protein is Prosalusin (TOR2A) of Homo sapiens (Human).